A 728-amino-acid polypeptide reads, in one-letter code: Double-strand break repair protein mre-11 (728 aa).

The segment covering 1-12 (MCGSDDSFDDFV) has biased composition (acidic residues). A disordered region spans residues 1 to 45 (MCGSDDSFDDFVPDSQEPASSRTRNQDHLDDDEVPCSQRPDAAND). Mn(2+) is bound by residues Asp73, His75, Asp113, and Asn181. His182 (proton donor) is an active-site residue. The Mn(2+) site is built by His269, His301, and His303. Positions 601 to 728 (KNPVADVEME…PSKKRDLSFF (128 aa)) are disordered. The span at 607-616 (VEMEEDEDDP) shows a compositional bias: acidic residues. Residues 622–632 (PQSTSRTNYAS) show a composition bias toward polar residues. Acidic residues predominate over residues 634 to 645 (SEDEVANSDEEM).

Belongs to the MRE11/RAD32 family. As to quaternary structure, component of the MRN complex composed of two heterodimers rad-50 and mre-11 associated with a single nbs-1. Mn(2+) serves as cofactor.

Its subcellular location is the nucleus. It localises to the chromosome. Its function is as follows. Core component of the MRN complex, which plays a central role in double-strand break (DSB) repair, DNA recombination, maintenance of telomere integrity and meiosis. The MRN complex is involved in the repair of DNA double-strand breaks (DSBs) via homologous recombination (HR), an error-free mechanism which primarily occurs during S and G2 phases. The complex (1) mediates the end resection of damaged DNA, which generates proper single-stranded DNA, a key initial steps in HR, and is (2) required for the recruitment of other repair factors and efficient activation of ATM and ATR upon DNA damage. Within the MRN complex, mre-11 possesses both single-strand endonuclease activity and double-strand-specific 3'-5' exonuclease activity. Mre-11 first endonucleolytically cleaves the 5' strand at DNA DSB ends to prevent non-homologous end joining (NHEJ) and licence HR. It then generates a single-stranded DNA gap via 3' to 5' exonucleolytic degradation, which is required for single-strand invasion and recombination. Required for meiotic crossing over and chiasma formation. Pachytene morphology and homolog pairing are normal. Vital in long term for maintenance of reproductive capacity of subsequent generations. This Caenorhabditis elegans protein is Double-strand break repair protein mre-11.